An 87-amino-acid chain; its full sequence is Down syndrome critical region protein 10 (87 aa).

In terms of tissue distribution, expressed in placenta and testis.

This chain is Down syndrome critical region protein 10 (DSCR10), found in Homo sapiens (Human).